Here is a 102-residue protein sequence, read N- to C-terminus: NADH-quinone oxidoreductase subunit K 1 (102 aa).

A run of 3 helical transmembrane segments spans residues 5–25, 31–51, and 65–85; these read ISHY…GIFL, IIIL…MVAF, and LFIL…LVVF.

Belongs to the complex I subunit 4L family. As to quaternary structure, NDH-1 is composed of 14 different subunits. Subunits NuoA, H, J, K, L, M, N constitute the membrane sector of the complex.

The protein resides in the cell inner membrane. The enzyme catalyses a quinone + NADH + 5 H(+)(in) = a quinol + NAD(+) + 4 H(+)(out). Its function is as follows. NDH-1 shuttles electrons from NADH, via FMN and iron-sulfur (Fe-S) centers, to quinones in the respiratory chain. The immediate electron acceptor for the enzyme in this species is believed to be ubiquinone. Couples the redox reaction to proton translocation (for every two electrons transferred, four hydrogen ions are translocated across the cytoplasmic membrane), and thus conserves the redox energy in a proton gradient. This chain is NADH-quinone oxidoreductase subunit K 1, found in Rhizobium meliloti (strain 1021) (Ensifer meliloti).